The sequence spans 273 residues: MSCEELEIVWNNIKAEARTLADCEPMLASFYHATLLKHENLGSALSYMLANKLSSPIMPAIAIREVVEEAYAADPEMIASAACDIQAVRTRDPAVDKYSTPLLYLKGFHALQAYRIGHWLWNQGRRALAIFLQNQVSVTFQVDIHPAAKIGRGIMLDHATGIVVGETAVIENDVSILQSVTLGGTGKSGGDRHPKIREGVMIGAGAKILGNIEVGRGAKIGAGSVVLQPVPPHTTAAGVPARIVGKPDSDKPSMDMDQHFNGINHTFEYGDGI.

Belongs to the transferase hexapeptide repeat family. In terms of assembly, homohexamer. Dimer of a homotrimer.

It localises to the cytoplasm. It catalyses the reaction L-serine + acetyl-CoA = O-acetyl-L-serine + CoA. Its pathway is amino-acid biosynthesis; L-cysteine biosynthesis; L-cysteine from L-serine: step 1/2. This chain is Serine acetyltransferase (cysE), found in Shigella flexneri.